The chain runs to 298 residues: Flavin-dependent thymidylate synthase (298 aa).

Residues 41-251 (GFVRLVDYMG…PLTYAAFVEY (211 aa)) form the ThyX domain. Residues Thr-87, 110 to 112 (RHR), and Glu-118 each bind FAD. Residues 107–110 (QWVR), 118–122 (EYSAR), and Arg-190 each bind dUMP. Residues 110-120 (RHRTANVNEYS) carry the ThyX motif motif. FAD contacts are provided by residues 206–208 (DLH) and His-212. Arg-217 is a dUMP binding site. The active-site Involved in ionization of N3 of dUMP, leading to its activation is the Arg-217.

This sequence belongs to the thymidylate synthase ThyX family. In terms of assembly, homotetramer. It depends on FAD as a cofactor.

The catalysed reaction is dUMP + (6R)-5,10-methylene-5,6,7,8-tetrahydrofolate + NADPH + H(+) = dTMP + (6S)-5,6,7,8-tetrahydrofolate + NADP(+). The protein operates within pyrimidine metabolism; dTTP biosynthesis. Its function is as follows. Catalyzes the reductive methylation of 2'-deoxyuridine-5'-monophosphate (dUMP) to 2'-deoxythymidine-5'-monophosphate (dTMP) while utilizing 5,10-methylenetetrahydrofolate (mTHF) as the methyl donor, and NADPH and FADH(2) as the reductant. This Ehrlichia ruminantium (strain Welgevonden) protein is Flavin-dependent thymidylate synthase.